A 402-amino-acid polypeptide reads, in one-letter code: tRNA pseudouridine synthase Pus10 (402 aa).

The region spanning 37-159 is the THUMP domain; it reads RLRGERLVEK…QIRVHVQINP (123 aa). The active-site Nucleophile is the aspartate 228. Residues tyrosine 296 and tyrosine 364 each contribute to the substrate site.

Belongs to the pseudouridine synthase Pus10 family.

It carries out the reaction uridine(54) in tRNA = pseudouridine(54) in tRNA. It catalyses the reaction uridine(55) in tRNA = pseudouridine(55) in tRNA. Functionally, responsible for synthesis of pseudouridine from uracil-54 and uracil-55 in the psi GC loop of transfer RNAs. The sequence is that of tRNA pseudouridine synthase Pus10 from Methanothermobacter marburgensis (strain ATCC BAA-927 / DSM 2133 / JCM 14651 / NBRC 100331 / OCM 82 / Marburg) (Methanobacterium thermoautotrophicum).